The chain runs to 293 residues: Proline iminopeptidase (293 aa).

The AB hydrolase-1 domain maps to lysine 28–glutamate 277. Catalysis depends on serine 104, which acts as the Nucleophile. Aspartate 244 is an active-site residue. Histidine 271 acts as the Proton donor in catalysis.

The protein belongs to the peptidase S33 family.

The enzyme catalyses Release of N-terminal proline from a peptide.. Its function is as follows. Releases the N-terminal proline from various substrates. The sequence is that of Proline iminopeptidase from Clostridioides difficile (strain 630) (Peptoclostridium difficile).